Reading from the N-terminus, the 248-residue chain is Killer cell lectin-like receptor subfamily I member 1 (248 aa).

The Cytoplasmic portion of the chain corresponds to 1–80; that stretch reads MLHSKRREYT…RQGPKSTVWR (80 aa). 2 short sequence motifs (ITIM motif) span residues 16-21 and 47-52; these read VTYTEL and LKYGEL. The helical; Signal-anchor for type II membrane protein transmembrane segment at 81 to 101 threads the bilayer; it reads VVTGMLGALCVVLMTTTGILL. Residues 102–248 lie on the Extracellular side of the membrane; that stretch reads PKLFSSQEEQ…KKSYICEFNI (147 aa). Disulfide bonds link Cys-132-Cys-145, Cys-161-Cys-244, and Cys-223-Cys-236. In terms of domain architecture, C-type lectin spans 139–245; the sequence is FGNNFYCVFK…CSAKKSYICE (107 aa). N-linked (GlcNAc...) asparagine glycans are attached at residues Asn-197, Asn-214, and Asn-220.

Heterodimer with KLRE1. Interacts with PTPN6. In terms of tissue distribution, expressed in natural killer (NK) cells.

The protein localises to the cell membrane. In terms of biological role, lectin-like receptor for natural killer (NK) cells. Heterodimer formation with KLRE1 mediates inhibition of NK cell cytolytic activity. This Mus musculus (Mouse) protein is Killer cell lectin-like receptor subfamily I member 1.